Here is a 90-residue protein sequence, read N- to C-terminus: UPF0297 protein lmo1503 (90 aa).

Belongs to the UPF0297 family.

The polypeptide is UPF0297 protein lmo1503 (Listeria monocytogenes serovar 1/2a (strain ATCC BAA-679 / EGD-e)).